The following is a 443-amino-acid chain: D-lactate dehydrogenase (443 aa).

Topologically, residues 1 to 182 (MSWIDELSKI…GGKTIKNSSG (182 aa)) are extracellular. One can recognise an FAD-binding PCMH-type domain in the interval 32–209 (RAAENFVVVK…TKATIRLFPQ (178 aa)). The chain crosses the membrane as a helical span at residues 183 to 203 (YSLLHLLVGSEGTLAVITKAT). Over 204–383 (IRLFPQMRDM…WEKSYFEFRK (180 aa)) the chain is Cytoplasmic. Residues 384 to 404 (SLLSLAVSLGGVISGEHGIGA) traverse the membrane as a helical segment. The Extracellular segment spans residues 405–443 (VKLSELEELFPEQFELMRQIKLLFDPKNILNPGKVVRKL).

It belongs to the FAD-binding oxidoreductase/transferase type 4 family. Requires FAD as cofactor. It depends on Zn(2+) as a cofactor.

It is found in the cell membrane. The enzyme catalyses (R)-lactate + A = pyruvate + AH2. Catalyzes the dehydrogenation of (R)-lactate (D-lactate) to pyruvate. Is likely involved in the utilization of D-lactate as a sole source for both carbon and electrons for dissimilatory sulfate reduction. Cannot use L-lactate as substrate, and NAD(+), horse cytochrome c, methylene blue or dimethylnaphthoquinone as acceptors. Active in vitro with artificial electron acceptors such as 2,6-dichlorophenolindophenol (DCPIP); the physiological acceptor is not known, but potential acceptors include cytochromes or quinones. This Archaeoglobus fulgidus (strain ATCC 49558 / DSM 4304 / JCM 9628 / NBRC 100126 / VC-16) protein is D-lactate dehydrogenase.